The chain runs to 275 residues: T-cell ecto-ADP-ribosyltransferase 1 (275 aa).

A signal peptide spans 1-20 (MPSNICKFFLTWWLIQQVTG). 2 cysteine pairs are disulfide-bonded: Cys41-Cys243 and Cys141-Cys193. Asn58 is a glycosylation site (N-linked (GlcNAc...) asparagine). Residues 61 to 238 (EKLKVAWEEA…IFLDSPKRKK (178 aa)) enclose the TR mART core domain. 3 residues coordinate NAD(+): Tyr98, Arg146, and Gln164. Residue Arg146 is part of the active site. The active site involves Ser167. An NAD(+)-binding site is contributed by Ser202. The active site involves Glu209. Ser246 is lipidated: GPI-anchor amidated serine. A propeptide spans 247-275 (SAGTRESCVSLFLVVLTSLLVQLLCLAEP) (removed in mature form).

This sequence belongs to the Arg-specific ADP-ribosyltransferase family. As to expression, postthymic T-cells.

The protein resides in the cell membrane. The enzyme catalyses L-arginyl-[protein] + NAD(+) = N(omega)-(ADP-D-ribosyl)-L-arginyl-[protein] + nicotinamide + H(+). It catalyses the reaction NAD(+) + H2O = ADP-D-ribose + nicotinamide + H(+). Has NAD(+) glycohydrolase activity and extremely low ADP-ribosyltransferase activity. The polypeptide is T-cell ecto-ADP-ribosyltransferase 1 (Art2a) (Rattus norvegicus (Rat)).